The sequence spans 526 residues: Light-independent protochlorophyllide reductase subunit B (526 aa).

Position 36 (D36) interacts with [4Fe-4S] cluster. D284 serves as the catalytic Proton donor. 419-420 (GL) contacts substrate.

The protein belongs to the ChlB/BchB/BchZ family. Protochlorophyllide reductase is composed of three subunits; BchL, BchN and BchB. Forms a heterotetramer of two BchB and two BchN subunits. The cofactor is [4Fe-4S] cluster.

It catalyses the reaction chlorophyllide a + oxidized 2[4Fe-4S]-[ferredoxin] + 2 ADP + 2 phosphate = protochlorophyllide a + reduced 2[4Fe-4S]-[ferredoxin] + 2 ATP + 2 H2O. Its pathway is porphyrin-containing compound metabolism; bacteriochlorophyll biosynthesis (light-independent). Component of the dark-operative protochlorophyllide reductase (DPOR) that uses Mg-ATP and reduced ferredoxin to reduce ring D of protochlorophyllide (Pchlide) to form chlorophyllide a (Chlide). This reaction is light-independent. The NB-protein (BchN-BchB) is the catalytic component of the complex. The protein is Light-independent protochlorophyllide reductase subunit B of Halorhodospira halophila (strain DSM 244 / SL1) (Ectothiorhodospira halophila (strain DSM 244 / SL1)).